The sequence spans 628 residues: tRNA(Thr) (cytosine(32)-N(3))-methyltransferase (628 aa).

Residues Met-1–Gly-18 are compositionally biased toward basic and acidic residues. Disordered stretches follow at residues Met-1 to Ala-106, Ala-124 to Leu-269, and Asn-302 to Ser-331. The segment covering Val-22–Leu-31 has biased composition (polar residues). The span at Lys-32 to Gln-42 shows a compositional bias: basic and acidic residues. Acidic residues predominate over residues Asp-53 to Pro-62. The residue at position 93 (Ser-93) is a Phosphoserine. Residues Glu-132–Glu-146 are compositionally biased toward acidic residues. Residue Thr-150 is modified to Phosphothreonine. The span at Pro-173–Ile-186 shows a compositional bias: acidic residues. A compositionally biased stretch (polar residues) spans Asn-196–Gly-207. A compositionally biased stretch (basic residues) spans Lys-215 to Asn-230. Positions Gly-231–Asp-240 are enriched in polar residues. A phosphoserine mark is found at Ser-321 and Ser-326. Residue Thr-347 is modified to Phosphothreonine. The S-adenosyl-L-methionine site is built by Trp-399, Tyr-403, Gly-441, Asp-466, Asp-492, Leu-493, and Ile-515.

This sequence belongs to the methyltransferase superfamily. METL family. In terms of assembly, interacts with SES1.

It localises to the cytoplasm. Its subcellular location is the cytoskeleton. It carries out the reaction cytidine(32) in tRNA(Thr) + S-adenosyl-L-methionine = N(3)-methylcytidine(32) in tRNA(Thr) + S-adenosyl-L-homocysteine + H(+). The enzyme catalyses cytidine(32) in tRNA(Ser) + S-adenosyl-L-methionine = N(3)-methylcytidine(32) in tRNA(Ser) + S-adenosyl-L-homocysteine + H(+). Functionally, S-adenosyl-L-methionine-dependent methyltransferase that mediates N(3)-methylcytidine modification of residue 32 of the tRNA anticodon loop of tRNA(Thr) and tRNA(Ser). N(3)-methylcytidine methylation of tRNA(Thr) requires the N6-threonylcarbamoylation of tRNA (t6A37) by the EKC/KEOPS complex as prerequisite. N(3)-methylcytidine methylation of tRNA(Ser) requires the formation of N(6)-dimethylallyladenosine(37) (i6A37) by MOD5 as prerequisite. Methylation of tRNA(Ser) is also stimulated by SES1. Binds F-actin and shows weak F-actin cross-linking activity. The protein is tRNA(Thr) (cytosine(32)-N(3))-methyltransferase (ABP140) of Saccharomyces cerevisiae (strain ATCC 204508 / S288c) (Baker's yeast).